The primary structure comprises 147 residues: Hemoglobin subunit epsilon (147 aa).

The region spanning 3–147 (HFTAEEKAAI…VAIALGHKYH (145 aa)) is the Globin domain. A phosphoserine mark is found at S14 and S51. Residues H64 and H93 each contribute to the heme b site.

This sequence belongs to the globin family. Heterotetramer of two alpha chains and two epsilon chains in early embryonic hemoglobin Gower-2; two zeta chains and two epsilon chains in early embryonic hemoglobin Gower-1. As to expression, red blood cells.

Its function is as follows. The epsilon chain is a beta-type chain of early mammalian embryonic hemoglobin. The sequence is that of Hemoglobin subunit epsilon (HBE1) from Saimiri boliviensis boliviensis (Bolivian squirrel monkey).